The following is a 162-amino-acid chain: Peptide methionine sulfoxide reductase MsrA (162 aa).

Residue Cys16 is part of the active site.

Belongs to the MsrA Met sulfoxide reductase family.

The catalysed reaction is L-methionyl-[protein] + [thioredoxin]-disulfide + H2O = L-methionyl-(S)-S-oxide-[protein] + [thioredoxin]-dithiol. It catalyses the reaction [thioredoxin]-disulfide + L-methionine + H2O = L-methionine (S)-S-oxide + [thioredoxin]-dithiol. Has an important function as a repair enzyme for proteins that have been inactivated by oxidation. Catalyzes the reversible oxidation-reduction of methionine sulfoxide in proteins to methionine. The sequence is that of Peptide methionine sulfoxide reductase MsrA from Geobacter sulfurreducens (strain ATCC 51573 / DSM 12127 / PCA).